A 143-amino-acid polypeptide reads, in one-letter code: Ribosome-binding factor A (143 aa).

The segment covering 119–129 (AVGDKPAVPRD) has biased composition (basic and acidic residues). The disordered stretch occupies residues 119 to 143 (AVGDKPAVPRDDNDDPVSDNPERDA).

The protein belongs to the RbfA family. As to quaternary structure, monomer. Binds 30S ribosomal subunits, but not 50S ribosomal subunits or 70S ribosomes.

The protein resides in the cytoplasm. Its function is as follows. One of several proteins that assist in the late maturation steps of the functional core of the 30S ribosomal subunit. Associates with free 30S ribosomal subunits (but not with 30S subunits that are part of 70S ribosomes or polysomes). Required for efficient processing of 16S rRNA. May interact with the 5'-terminal helix region of 16S rRNA. The chain is Ribosome-binding factor A from Marinobacter nauticus (strain ATCC 700491 / DSM 11845 / VT8) (Marinobacter aquaeolei).